Consider the following 242-residue polypeptide: Transcriptional regulatory protein btr (242 aa).

The HTH crp-type domain maps to 158–231; the sequence is MRSEQRLAAF…QREVRLIDLP (74 aa). Residues 191 to 210 constitute a DNA-binding region (H-T-H motif); that stretch reads REEIGNYLGLTLETVSRLFS.

May regulate gene expression in response to changes in oxygen levels or to changes in the redox potential of the bacterial environment. This is Transcriptional regulatory protein btr (btr) from Bordetella pertussis (strain Tohama I / ATCC BAA-589 / NCTC 13251).